The sequence spans 245 residues: 23S rRNA (guanosine-2'-O-)-methyltransferase RlmB (245 aa).

The S-adenosyl-L-methionine site is built by glycine 197, isoleucine 217, and leucine 226.

The protein belongs to the class IV-like SAM-binding methyltransferase superfamily. RNA methyltransferase TrmH family. RlmB subfamily.

The protein localises to the cytoplasm. The catalysed reaction is guanosine(2251) in 23S rRNA + S-adenosyl-L-methionine = 2'-O-methylguanosine(2251) in 23S rRNA + S-adenosyl-L-homocysteine + H(+). In terms of biological role, specifically methylates the ribose of guanosine 2251 in 23S rRNA. The chain is 23S rRNA (guanosine-2'-O-)-methyltransferase RlmB from Photobacterium profundum (strain SS9).